The chain runs to 222 residues: Exosome complex component Rrp4 (222 aa).

One can recognise an S1 motif domain in the interval 63–131 (NDSVIGKVVD…EVKKVKLGLH (69 aa)). The KH domain occupies 139-200 (EGGTLAYITP…EIVKRALEMI (62 aa)).

The protein belongs to the RRP4 family. As to quaternary structure, component of the archaeal exosome complex. Forms a trimer of Rrp4 and/or Csl4 subunits. The trimer associates with a hexameric ring-like arrangement composed of 3 Rrp41-Rrp42 heterodimers.

The protein localises to the cytoplasm. In terms of biological role, non-catalytic component of the exosome, which is a complex involved in RNA degradation. Increases the RNA binding and the efficiency of RNA degradation. Confers strong poly(A) specificity to the exosome. The sequence is that of Exosome complex component Rrp4 from Methanothermus fervidus (strain ATCC 43054 / DSM 2088 / JCM 10308 / V24 S).